Consider the following 462-residue polypeptide: Asparagine--tRNA ligase (462 aa).

This sequence belongs to the class-II aminoacyl-tRNA synthetase family. In terms of assembly, homodimer.

It localises to the cytoplasm. It catalyses the reaction tRNA(Asn) + L-asparagine + ATP = L-asparaginyl-tRNA(Asn) + AMP + diphosphate + H(+). The polypeptide is Asparagine--tRNA ligase (Borreliella burgdorferi (strain ATCC 35210 / DSM 4680 / CIP 102532 / B31) (Borrelia burgdorferi)).